The following is a 425-amino-acid chain: Alpha-muurolene synthase (425 aa).

Positions 97, 101, 240, 244, and 248 each coordinate Mg(2+). Residues 97–101 (DNISD) carry the DDXXD motif motif. The disordered stretch occupies residues 348-382 (VAPPPPPPPPTPPPQSSDADTKKQKVKAQDGKGPV). Residues 349 to 362 (APPPPPPPPTPPPQ) show a composition bias toward pro residues. The span at 366–377 (ADTKKQKVKAQD) shows a compositional bias: basic and acidic residues.

It belongs to the terpene synthase family. Mg(2+) serves as cofactor.

It carries out the reaction (2E,6E)-farnesyl diphosphate = alpha-muurolene + diphosphate. The enzyme catalyses (2E,6E)-farnesyl diphosphate = gamma-muurolene + diphosphate. It catalyses the reaction (2E,6E)-farnesyl diphosphate = (+)-(R)-germacrene A + diphosphate. Functionally, sesquiterpene synthase that catalyzes the formation of alpha-muurolene, and at lower level (+)-(R)-germacrene A and gamma-muurolene. The protein is Alpha-muurolene synthase (COP3) of Coprinopsis cinerea (strain Okayama-7 / 130 / ATCC MYA-4618 / FGSC 9003) (Inky cap fungus).